Reading from the N-terminus, the 894-residue chain is Protein SEY1 homolog (894 aa).

Low complexity-rich tracts occupy residues 1 to 10 (MSEEITTNQT) and 36 to 48 (VQEQ…QEQQ). The interval 1–97 (MSEEITTNQT…QKQQTQEQEH (97 aa)) is disordered. Residues 1 to 800 (MSEEITTNQT…EQNRLTSGGG (800 aa)) are Cytoplasmic-facing. A coiled-coil region spans residues 21–60 (RLSNENIKQEDEEQQVQEQQEQQQQEQQEQIDDQDTQQQE). The segment covering 49 to 65 (EQIDDQDTQQQEDEFVV) has biased composition (acidic residues). Low complexity predominate over residues 78–93 (TPTLQETPQQQKQQTQ). The GB1/RHD3-type G domain occupies 138-361 (GFDYSVISIL…ADSFIPKRKY (224 aa)). Residue 148–155 (GPQSSGKS) coordinates GTP. The chain crosses the membrane as a helical span at residues 801–821 (VPGYMIILLCVLGFNEFISII). Residues 822–824 (SSP) are Lumenal-facing. Residues 825–845 (LLLLLTILLGGVGFVLFKLGL) form a helical membrane-spanning segment. The Cytoplasmic segment spans residues 846–894 (AGPFIDYSSQILVHFISKVKDIVLHVEQLQEQNHNNNNNNNNTPKQKRE).

Belongs to the TRAFAC class dynamin-like GTPase superfamily. GB1/RHD3 GTPase family. RHD3 subfamily.

Its subcellular location is the endoplasmic reticulum membrane. In terms of biological role, probable GTP-binding protein that may be involved in cell development. The chain is Protein SEY1 homolog from Dictyostelium discoideum (Social amoeba).